Here is a 31-residue protein sequence, read N- to C-terminus: Cytochrome b6-f complex subunit 6 (31 aa).

Residues isoleucine 4 to serine 26 traverse the membrane as a helical segment.

It belongs to the PetL family. The 4 large subunits of the cytochrome b6-f complex are cytochrome b6, subunit IV (17 kDa polypeptide, PetD), cytochrome f and the Rieske protein, while the 4 small subunits are PetG, PetL, PetM and PetN. The complex functions as a dimer.

The protein resides in the plastid. It is found in the chloroplast thylakoid membrane. Component of the cytochrome b6-f complex, which mediates electron transfer between photosystem II (PSII) and photosystem I (PSI), cyclic electron flow around PSI, and state transitions. PetL is important for photoautotrophic growth as well as for electron transfer efficiency and stability of the cytochrome b6-f complex. The polypeptide is Cytochrome b6-f complex subunit 6 (Illicium oligandrum (Star anise)).